The primary structure comprises 1414 residues: DNA-directed RNA polymerase subunit beta' (1414 aa).

Zn(2+) is bound by residues C70, C72, C85, and C88. Residues D460, D462, and D464 each contribute to the Mg(2+) site. 4 residues coordinate Zn(2+): C814, C888, C895, and C898. The disordered stretch occupies residues 1378-1414 (EREAARQLANPFEDAPVTVGGEPEAPAADTPSDDSAE).

This sequence belongs to the RNA polymerase beta' chain family. In terms of assembly, the RNAP catalytic core consists of 2 alpha, 1 beta, 1 beta' and 1 omega subunit. When a sigma factor is associated with the core the holoenzyme is formed, which can initiate transcription. Mg(2+) serves as cofactor. Zn(2+) is required as a cofactor.

It catalyses the reaction RNA(n) + a ribonucleoside 5'-triphosphate = RNA(n+1) + diphosphate. Its function is as follows. DNA-dependent RNA polymerase catalyzes the transcription of DNA into RNA using the four ribonucleoside triphosphates as substrates. The polypeptide is DNA-directed RNA polymerase subunit beta' (Bordetella bronchiseptica (strain ATCC BAA-588 / NCTC 13252 / RB50) (Alcaligenes bronchisepticus)).